Reading from the N-terminus, the 1008-residue chain is G protein-regulated inducer of neurite outgrowth 1 (1008 aa).

The disordered stretch occupies residues 1–859; that stretch reads MDTAEDPAWL…SPPSRRDAGL (859 aa). At T60 the chain carries Phosphothreonine. A phosphoserine mark is found at S64 and S75. The span at 117–127 shows a compositional bias: polar residues; that stretch reads ISGTPEATTSG. 4 stretches are compositionally biased toward basic and acidic residues: residues 137–159, 167–178, 230–269, and 279–291; these read TEPKSSDDRNPMFLEKMDFKSSK, GKEDPGSSRKAD, PRKEDPGSLRKVDPVSSDKVDPVFPRKEEPRYSGKEHPVS, and EKVDLVLSGKRDP. S237 carries the phosphoserine modification. Composition is skewed to polar residues over residues 326 to 336 and 391 to 406; these read SGKNGPVSSGT and HTDTTASAKTDLTSLK. Residues S436 and S452 each carry the phosphoserine modification. The segment covering 454–466 has biased composition (basic and acidic residues); sequence GKEDPVSSRREDP. A compositionally biased stretch (polar residues) spans 481–491; it reads PESSGKTNPVS. Residues 549-559 show a composition bias toward basic and acidic residues; that stretch reads GKEDPVSKGKA. Position 615 is a phosphoserine (S615). Over residues 643 to 656 the composition is skewed to low complexity; that stretch reads PGQEGAAAPGEAGA. Residues 659–679 show a composition bias toward basic and acidic residues; it reads LKKETPQASEKVDPGSCRKAE. S737 is modified (phosphoserine). Residues 742-752 show a composition bias toward basic and acidic residues; sequence RGSEGRVEPKA. Polar residues predominate over residues 755–764; it reads VSSTEASSLG. S799 carries the phosphoserine modification. The span at 838–847 shows a compositional bias: low complexity; sequence SAFSFQAAPR. T877 bears the Phosphothreonine mark. S895 and S914 each carry phosphoserine. An interaction with GNAO1 region spans residues 899–1008; it reads AAVAPPEPAE…CCSRAGPTAE (110 aa). The interval 943–986 is disordered; it reads ERQIEEHGRQGAPAPPPAARAGPGRSGSVRTAPPDGAAKRPPGL. S993 is subject to Phosphoserine. S-palmitoyl cysteine attachment occurs at residues C999 and C1000.

As to quaternary structure, interacts with activated forms of GNAI1, GNAO1 and GNAZ. In terms of processing, palmitoylation on Cys-999 and/or Cys-1000 is required for membrane targeting. In terms of tissue distribution, widely expressed in the central nervous system, with highest levels in spinal cord.

It is found in the cell membrane. The protein localises to the cell projection. Its subcellular location is the growth cone. Its function is as follows. May be involved in neurite outgrowth. The protein is G protein-regulated inducer of neurite outgrowth 1 (GPRIN1) of Homo sapiens (Human).